The following is a 156-amino-acid chain: Snaclec A12 (156 aa).

A signal peptide spans 1–23 (MGRSISVSFGLLVVFLSLSGTGA). 3 disulfides stabilise this stretch: Cys-27–Cys-38, Cys-55–Cys-148, and Cys-123–Cys-140. The region spanning 34-149 (YEGHCYKVFN…CELAYHFICM (116 aa)) is the C-type lectin domain.

It belongs to the snaclec family. As to quaternary structure, heterodimer; disulfide-linked. As to expression, expressed by the venom gland.

It localises to the secreted. Functionally, interferes with one step of hemostasis (modulation of platelet aggregation, or coagulation cascade, for example). This is Snaclec A12 from Macrovipera lebetinus (Levantine viper).